The following is a 209-amino-acid chain: Small ribosomal subunit protein uS4 (209 aa).

The disordered stretch occupies residues 22-45 (RGRNPLLRKPNPPGQHGMQRKKKS). One can recognise an S4 RNA-binding domain in the interval 93-154 (CRLDSIVYRL…KSKRLAIVTE (62 aa)).

It belongs to the universal ribosomal protein uS4 family. In terms of assembly, part of the 30S ribosomal subunit. Contacts protein S5. The interaction surface between S4 and S5 is involved in control of translational fidelity.

One of the primary rRNA binding proteins, it binds directly to 16S rRNA where it nucleates assembly of the body of the 30S subunit. Functionally, with S5 and S12 plays an important role in translational accuracy. This Chlamydia trachomatis serovar L2 (strain ATCC VR-902B / DSM 19102 / 434/Bu) protein is Small ribosomal subunit protein uS4.